The chain runs to 275 residues: Putative ankyrin repeat protein L715 (275 aa).

ANK repeat units follow at residues Asn94–Tyr123, Asn124–Asp153, Ile155–Pro183, and Ile184–Thr213. Positions Asn253–Asn275 are disordered. The span at Asp255 to Asn275 shows a compositional bias: acidic residues.

In Acanthamoeba polyphaga mimivirus (APMV), this protein is Putative ankyrin repeat protein L715.